A 142-amino-acid chain; its full sequence is COA8 family protein Y39B6A.34, mitochondrial (142 aa).

This sequence belongs to the COA8 family.

The protein resides in the mitochondrion inner membrane. May be required for cytochrome c complex (COX) assembly and function, COX being the terminal component of the mitochondrial respiratory chain. The sequence is that of COA8 family protein Y39B6A.34, mitochondrial from Caenorhabditis elegans.